The primary structure comprises 438 residues: tRNA modification GTPase MnmE (438 aa).

3 residues coordinate (6S)-5-formyl-5,6,7,8-tetrahydrofolate: arginine 20, glutamate 79, and lysine 119. One can recognise a TrmE-type G domain in the interval 215-360 (GVEVAIVGPP…LEAALAARVG (146 aa)). GTP is bound by residues 225 to 230 (NAGKSS), 244 to 250 (SDEAGTT), and 269 to 272 (DTAG). Residues serine 229 and threonine 250 each contribute to the Mg(2+) site. Residue lysine 438 coordinates (6S)-5-formyl-5,6,7,8-tetrahydrofolate.

This sequence belongs to the TRAFAC class TrmE-Era-EngA-EngB-Septin-like GTPase superfamily. TrmE GTPase family. Homodimer. Heterotetramer of two MnmE and two MnmG subunits. Requires K(+) as cofactor.

It localises to the cytoplasm. Functionally, exhibits a very high intrinsic GTPase hydrolysis rate. Involved in the addition of a carboxymethylaminomethyl (cmnm) group at the wobble position (U34) of certain tRNAs, forming tRNA-cmnm(5)s(2)U34. This Parvibaculum lavamentivorans (strain DS-1 / DSM 13023 / NCIMB 13966) protein is tRNA modification GTPase MnmE.